A 401-amino-acid chain; its full sequence is Phosphoglycerate kinase (401 aa).

Residues 21–23 (DLN), R37, 60–63 (HLGR), R119, and R152 each bind substrate. ATP is bound by residues K203, E325, and 351 to 354 (GGDT).

Belongs to the phosphoglycerate kinase family. As to quaternary structure, monomer.

It localises to the cytoplasm. The enzyme catalyses (2R)-3-phosphoglycerate + ATP = (2R)-3-phospho-glyceroyl phosphate + ADP. It participates in carbohydrate degradation; glycolysis; pyruvate from D-glyceraldehyde 3-phosphate: step 2/5. The chain is Phosphoglycerate kinase from Acidithiobacillus ferrooxidans (strain ATCC 23270 / DSM 14882 / CIP 104768 / NCIMB 8455) (Ferrobacillus ferrooxidans (strain ATCC 23270)).